The following is a 126-amino-acid chain: Small ribosomal subunit protein uS13 (126 aa).

A disordered region spans residues R94–K126. Residues R108–K126 show a composition bias toward basic residues.

It belongs to the universal ribosomal protein uS13 family. Part of the 30S ribosomal subunit. Forms a loose heterodimer with protein S19. Forms two bridges to the 50S subunit in the 70S ribosome.

Located at the top of the head of the 30S subunit, it contacts several helices of the 16S rRNA. In the 70S ribosome it contacts the 23S rRNA (bridge B1a) and protein L5 of the 50S subunit (bridge B1b), connecting the 2 subunits; these bridges are implicated in subunit movement. Contacts the tRNAs in the A and P-sites. In Streptomyces griseus subsp. griseus (strain JCM 4626 / CBS 651.72 / NBRC 13350 / KCC S-0626 / ISP 5235), this protein is Small ribosomal subunit protein uS13.